A 344-amino-acid chain; its full sequence is Biotin synthase (344 aa).

The Radical SAM core domain occupies 65–290; it reads PEVEVEGIIS…RTMLRFAGGR (226 aa). [4Fe-4S] cluster is bound by residues cysteine 80, cysteine 84, and cysteine 87. Positions 123, 156, 215, and 285 each coordinate [2Fe-2S] cluster.

The protein belongs to the radical SAM superfamily. Biotin synthase family. Homodimer. Requires [4Fe-4S] cluster as cofactor. It depends on [2Fe-2S] cluster as a cofactor.

It carries out the reaction (4R,5S)-dethiobiotin + (sulfur carrier)-SH + 2 reduced [2Fe-2S]-[ferredoxin] + 2 S-adenosyl-L-methionine = (sulfur carrier)-H + biotin + 2 5'-deoxyadenosine + 2 L-methionine + 2 oxidized [2Fe-2S]-[ferredoxin]. The protein operates within cofactor biosynthesis; biotin biosynthesis; biotin from 7,8-diaminononanoate: step 2/2. Functionally, catalyzes the conversion of dethiobiotin (DTB) to biotin by the insertion of a sulfur atom into dethiobiotin via a radical-based mechanism. The sequence is that of Biotin synthase from Mycolicibacterium paratuberculosis (strain ATCC BAA-968 / K-10) (Mycobacterium paratuberculosis).